The chain runs to 135 residues: Large ribosomal subunit protein bL21 (135 aa).

A compositionally biased stretch (polar residues) spans 109–128; the sequence is TLATAQSAPPSTSEATTDTT. The disordered stretch occupies residues 109 to 135; that stretch reads TLATAQSAPPSTSEATTDTTGIPAAEE.

Belongs to the bacterial ribosomal protein bL21 family. In terms of assembly, part of the 50S ribosomal subunit. Contacts protein L20.

Functionally, this protein binds to 23S rRNA in the presence of protein L20. The sequence is that of Large ribosomal subunit protein bL21 from Synechococcus sp. (strain JA-3-3Ab) (Cyanobacteria bacterium Yellowstone A-Prime).